The following is a 762-amino-acid chain: MSSHITLIKTNTSNENQMTQCNYPVDNDVMIIQAMVNNVTKQITPVWPLEKFIACNSLHGFESMSFEEAVIQNQTAKKGTPFNEKLERVNWHMIKWCGSFLDIGQGTIEMPHRDKGLYFGFLKLAPFDSTLHQNNKSTKNWLSNLPEMPEQAIRLCLDKLGVLNQRQEEFLQSTLSHLPGWAGYIKWISEWKNRNGKEENPVSLVDFLAVRLIITCILWPEANLEEKKKEKDSADTKQLIQNIKHKEDDYRQLLLKKLLPELNKVQIKGNRAKAQMVFCIDVRSEPFRRCIEKLGHYETLGFAGFFGLPVSIKDYDGETIKDSCPVLLKPRFNIHEKAIAANEHCLEHHEKGKEFKKILNRVYQQLKYNFSTPFALVESLGIWCGITMFLKSCSPIFARRLTQDLNEMICPSIQTQPVFELDLLEKEVGISLQEQIAYAEMALRLMGLTDNFAKLVIFCGHGSSTQNNPYASALDCGACGGNQGGKNAQLLASILNKITVRRALAENGINIPQDTVFCGAQHDTTTDEVEIYHSNVSQFIDQDILDQLRADLNMAKHNNNLERINYLNSIDCAEKDIVRRSADWSETRPEWGLARNAAFIVAPRQLTKNIDLEGRCFLHSYDWSKDEDGTLLETILTAPMVVAQWINTQYLFSTIDNVAYGSGSKITHNVAGKIGVMQGNASDLMHGLPLQSVMSHDEKSFHEPQRLLTVVYAPREIISELVEKHDVLKTLFFNEWVHLVAIDPRSHLFYKLEKTNTWSVIK.

4 residues coordinate Zn(2+): C279, D281, H461, and C476.

The protein belongs to the inorganic carbon transporter (TC 9.A.2) DabA family. Forms a complex with DabB. Zn(2+) serves as cofactor.

Its subcellular location is the cell inner membrane. Functionally, part of an energy-coupled inorganic carbon pump. This is Probable inorganic carbon transporter subunit DabA from Legionella pneumophila subsp. pneumophila (strain Philadelphia 1 / ATCC 33152 / DSM 7513).